Consider the following 432-residue polypeptide: Small ribosomal subunit protein uS5m (432 aa).

Residues 110-130 are disordered; the sequence is AGARKGRGKRTKKKKRKDLNR. Residues 113–127 are compositionally biased toward basic residues; sequence RKGRGKRTKKKKRKD. Residues 220–284 form the S5 DRBM domain; that stretch reads FDTRILEVRN…NRAIHYLHYI (65 aa).

It belongs to the universal ribosomal protein uS5 family. Component of the mitochondrial ribosome small subunit (28S) which comprises a 12S rRNA and about 30 distinct proteins.

The protein resides in the mitochondrion. The protein is Small ribosomal subunit protein uS5m (Mrps5) of Mus musculus (Mouse).